The sequence spans 375 residues: MARRYDELPHYPGIVDGPAALASFPETVPAVPGPYGPHRPPQPLPPGLDSDGLKREKDEIYGHPLFPLLALVFEKCELATCSPRDGAGAGLGTPPGGDVCSSDSFNEDIAAFAKQVRSERPLFSSNPELDNLMIQAIQVLRFHLLELEKVHDLCDNFCHRYITCLKGKMPIDLVIEDRDGGCREDFEDYPASCPSLPDQNNMWIRDHEDSGSVHLGTPGPSSGGLASQSGDNSSDQGDGLDTSVASPSSGGEDEDLDQERRRNKKRGIFPKVATNIMRAWLFQHLSHPYPSEEQKKQLAQDTGLTILQVNNWFINARRRIVQPMIDQSNRTGQGAAFSPEGQPIGGYTETQPHVAVRPPGSVGMSLNLEGEWHYL.

A disordered region spans residues 25-51; sequence PETVPAVPGPYGPHRPPQPLPPGLDSD. Residues 31 to 46 are compositionally biased toward pro residues; that stretch reads VPGPYGPHRPPQPLPP. The MEIS N-terminal domain occupies 96-179; the sequence is GGDVCSSDSF…PIDLVIEDRD (84 aa). Disordered regions lie at residues 197–268 and 329–348; these read PDQN…KRGI and NRTG…GGYT. Residues 227–241 show a composition bias toward low complexity; it reads SQSGDNSSDQGDGLD. The segment at residues 262–324 is a DNA-binding region (homeobox; TALE-type); that stretch reads RNKKRGIFPK…NARRRIVQPM (63 aa).

The protein belongs to the TALE/MEIS homeobox family.

Its subcellular location is the nucleus. In terms of biological role, transcriptional regulator which directly modulates PDPK1 expression, thus promoting survival of pancreatic beta-cells. Also regulates expression of NDFIP1, BNIP3, and CCNG1. The polypeptide is Homeobox protein Meis3 (MEIS3) (Homo sapiens (Human)).